Here is a 218-residue protein sequence, read N- to C-terminus: Probable GTP-binding protein EngB (218 aa).

One can recognise an EngB-type G domain in the interval 31–205; the sequence is VGVEIAFAGR…LGILNEWCHP (175 aa). Residues 39–46, 66–70, 84–87, 151–154, and 184–186 each bind GTP; these read GRSNAGKS, GRTQL, DLPG, TKCD, and FSS. Mg(2+) contacts are provided by serine 46 and threonine 68.

The protein belongs to the TRAFAC class TrmE-Era-EngA-EngB-Septin-like GTPase superfamily. EngB GTPase family. It depends on Mg(2+) as a cofactor.

Necessary for normal cell division and for the maintenance of normal septation. This chain is Probable GTP-binding protein EngB, found in Shewanella loihica (strain ATCC BAA-1088 / PV-4).